A 376-amino-acid polypeptide reads, in one-letter code: Serpin B6 (376 aa).

An N-acetylmethionine modification is found at M1. S151 bears the Phosphoserine mark. Position 195 is an N6-acetyllysine (K195).

It belongs to the serpin family. Ov-serpin subfamily. In terms of assembly, forms a complex with the monomeric form of beta-tryptase.

The protein resides in the cytoplasm. Functionally, inhibitor of cathepsin G, kallikrein-8 and thrombin. May play an important role in the inner ear in the protection against leakage of lysosomal content during stress. May be involved in the regulation of serine proteinases present in the brain or extravasated from the blood. The protein is Serpin B6 (SERPINB6) of Pongo abelii (Sumatran orangutan).